An 876-amino-acid chain; its full sequence is Alanine--tRNA ligase (876 aa).

Lys-74 bears the N6-acetyllysine mark. Zn(2+)-binding residues include His-564, His-568, Cys-666, and His-670.

This sequence belongs to the class-II aminoacyl-tRNA synthetase family. Homotetramer. The cofactor is Zn(2+).

It is found in the cytoplasm. The enzyme catalyses tRNA(Ala) + L-alanine + ATP = L-alanyl-tRNA(Ala) + AMP + diphosphate. Functionally, catalyzes the attachment of alanine to tRNA(Ala) in a two-step reaction: alanine is first activated by ATP to form Ala-AMP and then transferred to the acceptor end of tRNA(Ala). Also edits incorrectly charged Ser-tRNA(Ala) and Gly-tRNA(Ala) via its editing domain. The chain is Alanine--tRNA ligase from Escherichia coli O1:K1 / APEC.